The chain runs to 192 residues: Peptidyl-tRNA hydrolase (192 aa).

A tRNA-binding site is contributed by Y14. Catalysis depends on H19, which acts as the Proton acceptor. The tRNA site is built by Y66 and N68.

Belongs to the PTH family. As to quaternary structure, monomer.

The protein resides in the cytoplasm. It catalyses the reaction an N-acyl-L-alpha-aminoacyl-tRNA + H2O = an N-acyl-L-amino acid + a tRNA + H(+). In terms of biological role, hydrolyzes ribosome-free peptidyl-tRNAs (with 1 or more amino acids incorporated), which drop off the ribosome during protein synthesis, or as a result of ribosome stalling. Catalyzes the release of premature peptidyl moieties from peptidyl-tRNA molecules trapped in stalled 50S ribosomal subunits, and thus maintains levels of free tRNAs and 50S ribosomes. The protein is Peptidyl-tRNA hydrolase of Coprothermobacter proteolyticus (strain ATCC 35245 / DSM 5265 / OCM 4 / BT).